Here is a 157-residue protein sequence, read N- to C-terminus: Ribosome maturation factor RimP (157 aa).

Belongs to the RimP family.

It localises to the cytoplasm. In terms of biological role, required for maturation of 30S ribosomal subunits. The protein is Ribosome maturation factor RimP of Thermobifida fusca (strain YX).